Here is a 404-residue protein sequence, read N- to C-terminus: Tryptophan synthase beta chain (404 aa).

K94 is modified (N6-(pyridoxal phosphate)lysine).

The protein belongs to the TrpB family. In terms of assembly, tetramer of two alpha and two beta chains. Pyridoxal 5'-phosphate is required as a cofactor.

It carries out the reaction (1S,2R)-1-C-(indol-3-yl)glycerol 3-phosphate + L-serine = D-glyceraldehyde 3-phosphate + L-tryptophan + H2O. The protein operates within amino-acid biosynthesis; L-tryptophan biosynthesis; L-tryptophan from chorismate: step 5/5. The beta subunit is responsible for the synthesis of L-tryptophan from indole and L-serine. The protein is Tryptophan synthase beta chain of Staphylococcus saprophyticus subsp. saprophyticus (strain ATCC 15305 / DSM 20229 / NCIMB 8711 / NCTC 7292 / S-41).